The chain runs to 25 residues: Insulin mimetic protein (25 aa).

The segment at 1–25 (TKDPELKQCKKQQKKQQQYDDDDKK) is disordered.

Glycosylated. Expressed in seed.

In Cnidoscolus quercifolius, this protein is Insulin mimetic protein.